The primary structure comprises 107 residues: Large ribosomal subunit protein P1 (107 aa).

Positions 67-82 (GPASAAPAGAAGAAAP) are enriched in low complexity. Positions 67–107 (GPASAAPAGAAGAAAPAEEKAEEKEEEKEESDEDMGFGLFD) are disordered. A compositionally biased stretch (acidic residues) spans 90–101 (KEEEKEESDEDM).

This sequence belongs to the eukaryotic ribosomal protein P1/P2 family. P1 and P2 exist as dimers at the large ribosomal subunit.

The protein resides in the cytoplasm. Plays an important role in the elongation step of protein synthesis. The protein is Large ribosomal subunit protein P1 of Penicillium crustosum (Blue mold fungus).